Here is a 234-residue protein sequence, read N- to C-terminus: 1-(5-phosphoribosyl)-5-[(5-phosphoribosylamino)methylideneamino] imidazole-4-carboxamide isomerase (234 aa).

The active-site Proton acceptor is Asp9. The active-site Proton donor is Asp131.

The protein belongs to the HisA/HisF family.

Its subcellular location is the cytoplasm. It catalyses the reaction 1-(5-phospho-beta-D-ribosyl)-5-[(5-phospho-beta-D-ribosylamino)methylideneamino]imidazole-4-carboxamide = 5-[(5-phospho-1-deoxy-D-ribulos-1-ylimino)methylamino]-1-(5-phospho-beta-D-ribosyl)imidazole-4-carboxamide. It participates in amino-acid biosynthesis; L-histidine biosynthesis; L-histidine from 5-phospho-alpha-D-ribose 1-diphosphate: step 4/9. This is 1-(5-phosphoribosyl)-5-[(5-phosphoribosylamino)methylideneamino] imidazole-4-carboxamide isomerase from Staphylococcus aureus (strain NCTC 8325 / PS 47).